A 972-amino-acid chain; its full sequence is POM121-like protein 2 (972 aa).

Disordered regions lie at residues methionine 1–proline 67, leucine 281–leucine 302, threonine 328–methionine 359, glycine 406–aspartate 431, leucine 676–glycine 726, and serine 953–lysine 972. The segment covering arginine 40 to arginine 57 has biased composition (basic residues). Polar residues-rich tracts occupy residues serine 287–leucine 302 and valine 339–alanine 352. The segment covering proline 413–aspartate 431 has biased composition (low complexity). Residues glycine 677–alanine 696 show a composition bias toward polar residues. The span at leucine 697–lysine 706 shows a compositional bias: low complexity.

Belongs to the POM121 family.

The chain is POM121-like protein 2 (Pom121l2) from Mus musculus (Mouse).